We begin with the raw amino-acid sequence, 1587 residues long: NHS-like protein 1 (1587 aa).

Ser-24 is subject to Phosphoserine. 2 disordered regions span residues 140–163 and 176–202; these read FAAG…KCSL and RPKT…PLPT. Over residues 179–196 the composition is skewed to polar residues; sequence TPTSGDFSDLHTQTNWTK. Phosphoserine is present on residues Ser-197 and Ser-328. The segment covering 431–446 has biased composition (polar residues); sequence SAGQLDSRTPGSSSYS. Disordered stretches follow at residues 431 to 470 and 549 to 584; these read SAGQ…PRHH and SEPW…VSSC. Residues 449–470 are compositionally biased toward basic and acidic residues; it reads KPRDRPTPRCSVKDDHQSPRHH. At Ser-563 the chain carries Phosphoserine. Over residues 573-584 the composition is skewed to polar residues; sequence GCSTPTSNVSSC. Phosphoserine is present on Ser-629. 3 disordered regions span residues 661 to 687, 705 to 767, and 789 to 1059; these read KAKK…QTNG, SLPG…SSVK, and NPTG…RPPM. Over residues 705-720 the composition is skewed to low complexity; it reads SLPGKGGSSPSQSPCS. 4 stretches are compositionally biased toward polar residues: residues 730–750, 757–767, 792–801, and 838–855; these read SRSQ…TPNV, TPSQSDTSSVK, GGCSANTEAA, and RVTS…TPTA. Low complexity predominate over residues 885–911; it reads SLISSMSISSSSTSLSSNTSTEGSGTM. Composition is skewed to pro residues over residues 923 to 934, 958 to 972, and 998 to 1021; these read APPPPPLPPLPS, PLPP…PPEA, and SLPP…PPLD. Over residues 1040 to 1055 the composition is skewed to basic and acidic residues; sequence SSREALRRPANKEEGC. Ser-1079 carries the post-translational modification Phosphoserine. Disordered stretches follow at residues 1083-1534 and 1565-1587; these read AVLF…ARRA and VDGI…EQKS. 2 stretches are compositionally biased toward polar residues: residues 1089–1099 and 1112–1141; these read PSAQEQRTPTA and SRNS…SQSQ. Residues Ser-1157 and Ser-1218 each carry the phosphoserine modification. Residues 1222–1234 are compositionally biased toward basic and acidic residues; sequence AEGEAVRSQEEKS. Residues 1275–1285 show a composition bias toward polar residues; it reads QPNTSPGPTQE. A compositionally biased stretch (basic and acidic residues) spans 1360-1370; that stretch reads GRKDSEDDHTR. Phosphoserine occurs at positions 1373 and 1375. Thr-1379 carries the phosphothreonine modification. Over residues 1392–1409 the composition is skewed to polar residues; sequence QVGSIQRSIKKSTTSSDN. A compositionally biased stretch (basic and acidic residues) spans 1434-1447; the sequence is KSTDPRFQRSRSEP. Composition is skewed to low complexity over residues 1448 to 1460 and 1484 to 1503; these read SADS…SCSP and SGPR…SRYS. The span at 1576–1587 shows a compositional bias: polar residues; the sequence is PSEQCGGTEQKS.

This sequence belongs to the NHS family.

This chain is NHS-like protein 1 (Nhsl1), found in Mus musculus (Mouse).